We begin with the raw amino-acid sequence, 260 residues long: Deoxyribonuclease-1 (260 aa).

The N-linked (GlcNAc...) asparagine glycan is linked to Asn-18. The active site involves Glu-78. Cysteines 101 and 104 form a disulfide. His-134 is an active-site residue. Cys-173 and Cys-209 are oxidised to a cystine.

This sequence belongs to the DNase I family. Ca(2+) is required as a cofactor. The cofactor is Mg(2+).

Its subcellular location is the secreted. It localises to the zymogen granule. The protein resides in the nucleus envelope. The catalysed reaction is Endonucleolytic cleavage to 5'-phosphodinucleotide and 5'-phosphooligonucleotide end-products.. Its function is as follows. Serum endocuclease secreted into body fluids by a wide variety of exocrine and endocrine organs. Expressed by non-hematopoietic tissues and preferentially cleaves protein-free DNA. Among other functions, seems to be involved in cell death by apoptosis. Binds specifically to G-actin and blocks actin polymerization. Together with DNASE1L3, plays a key role in degrading neutrophil extracellular traps (NETs). NETs are mainly composed of DNA fibers and are released by neutrophils to bind pathogens during inflammation. Degradation of intravascular NETs by DNASE1 and DNASE1L3 is required to prevent formation of clots that obstruct blood vessels and cause organ damage following inflammation. In Ovis aries (Sheep), this protein is Deoxyribonuclease-1 (DNASE1).